The chain runs to 397 residues: Pentatricopeptide repeat-containing protein At1g80150, mitochondrial (397 aa).

Residues 1–81 (MLSLRHIRRF…FAFEDTVSRL (81 aa)) constitute a mitochondrion transit peptide. 8 PPR repeats span residues 105-139 (REGF…GCKR), 140-170 (SVKS…APSK), 176-210 (DAVS…GLTP), 211-245 (DVVT…GCKP), 246-280 (NLTT…QVEP), 281-315 (DSIT…GYKP), 316-350 (NLKI…KWYP), and 351-381 (NLDT…VHRR).

The protein belongs to the PPR family. P subfamily.

The protein localises to the mitochondrion. This chain is Pentatricopeptide repeat-containing protein At1g80150, mitochondrial, found in Arabidopsis thaliana (Mouse-ear cress).